Here is a 552-residue protein sequence, read N- to C-terminus: uncharacterized protein (552 aa).

Residues 8-200 (KLFADMIIQG…LLCVYEGFLK (193 aa)) enclose the DhaL domain.

This is an uncharacterized protein from Staphylococcus epidermidis (strain ATCC 35984 / DSM 28319 / BCRC 17069 / CCUG 31568 / BM 3577 / RP62A).